The primary structure comprises 1183 residues: PAN2-PAN3 deadenylation complex catalytic subunit PAN2 (1183 aa).

The tract at residues 1-24 (MDGWTEISRIAATTQPPKGPSPHI) is disordered. 3 WD repeats span residues 159–207 (DLNK…SIKS), 269–309 (PFPA…NVFL), and 327–366 (SKAP…STIT). The segment at 369-520 (FVNFPASIEQ…FQYKVPLSRK (152 aa)) is linker. Positions 521 to 919 (KIPNCYSRLQ…KPVILVYHDS (399 aa)) constitute a USP domain. Positions 977-1151 (IAIDAEFVNL…EDAYTALLLY (175 aa)) constitute an Exonuclease domain. A divalent metal cation is bound by residues Asp-980, Glu-982, Asp-1090, and Asp-1143.

It belongs to the peptidase C19 family. PAN2 subfamily. As to quaternary structure, forms a heterotrimer with an asymmetric homodimer of the regulatory subunit PAN3 to form the poly(A)-nuclease (PAN) deadenylation complex. Requires a divalent metal cation as cofactor.

The protein localises to the cytoplasm. It catalyses the reaction Exonucleolytic cleavage of poly(A) to 5'-AMP.. Its activity is regulated as follows. Positively regulated by the regulatory subunit PAN3. In terms of biological role, catalytic subunit of the poly(A)-nuclease (PAN) deadenylation complex, one of two cytoplasmic mRNA deadenylases involved in mRNA turnover. PAN specifically shortens poly(A) tails of RNA and the activity is stimulated by poly(A)-binding protein PAB1. PAN deadenylation is followed by rapid degradation of the shortened mRNA tails by the CCR4-NOT complex. Deadenylated mRNAs are then degraded by two alternative mechanisms, namely exosome-mediated 3'-5' exonucleolytic degradation, or deadenylation-dependent mRNA decaping and subsequent 5'-3' exonucleolytic degradation by XRN1. May also be involved in post-transcriptional maturation of mRNA poly(A) tails. In Scheffersomyces stipitis (strain ATCC 58785 / CBS 6054 / NBRC 10063 / NRRL Y-11545) (Yeast), this protein is PAN2-PAN3 deadenylation complex catalytic subunit PAN2.